The sequence spans 213 residues: Anti-sigma-E factor ChrR (213 aa).

The sufficient to bind sigma factor and inhibit its activity stretch occupies residues 2–85 (TIRHHVSDAL…QIQRPAPARR (84 aa)). Positions 6, 31, 35, 38, 141, 143, 147, and 177 each coordinate Zn(2+). A required for response to singlet oxygen region spans residues 86 to 194 (ADPRAPAPLA…LDCICLAATD (109 aa)).

This sequence belongs to the zinc-associated anti-sigma factor (ZAS) superfamily. In terms of assembly, forms a 1:1 complex with cognate ECF RNA polymerase sigma factor RpoE; this inhibits the interaction of RpoE with the RNA polymerase catalytic core. Requires Zn(2+) as cofactor.

Functionally, anti-sigma factor that inhibits the activity of the extracytoplasmic function (ECF) sigma-E factor (RpoE), thereby indirectly regulating the transcription of the cycA and rpoE genes. ECF sigma factors are held in an inactive form by a cognate anti-sigma factor. The sequence is that of Anti-sigma-E factor ChrR (chrR) from Cereibacter sphaeroides (strain ATCC 17023 / DSM 158 / JCM 6121 / CCUG 31486 / LMG 2827 / NBRC 12203 / NCIMB 8253 / ATH 2.4.1.) (Rhodobacter sphaeroides).